A 605-amino-acid polypeptide reads, in one-letter code: UvrABC system protein C (605 aa).

Residues 15–92 (GLPGCYLMKN…IQKHQPYFNI (78 aa)) form the GIY-YIG domain. The region spanning 197 to 232 (GHAKKDLTQRMEKAAADMAYERAGDLRDQIRYIEAT) is the UVR domain.

This sequence belongs to the UvrC family. Interacts with UvrB in an incision complex.

The protein resides in the cytoplasm. The UvrABC repair system catalyzes the recognition and processing of DNA lesions. UvrC both incises the 5' and 3' sides of the lesion. The N-terminal half is responsible for the 3' incision and the C-terminal half is responsible for the 5' incision. The chain is UvrABC system protein C from Levilactobacillus brevis (strain ATCC 367 / BCRC 12310 / CIP 105137 / JCM 1170 / LMG 11437 / NCIMB 947 / NCTC 947) (Lactobacillus brevis).